We begin with the raw amino-acid sequence, 189 residues long: UPF0301 protein A1E_00140 (189 aa).

Belongs to the UPF0301 (AlgH) family.

This is UPF0301 protein A1E_00140 from Rickettsia canadensis (strain McKiel).